A 146-amino-acid polypeptide reads, in one-letter code: Hemoglobin subunit beta (146 aa).

A Globin domain is found at 2–146 (HWSAEEKQLI…VAHALARKYH (145 aa)). Residues His63 and His92 each contribute to the heme b site.

Belongs to the globin family. As to quaternary structure, heterotetramer of two alpha chains and two beta chains. In terms of tissue distribution, red blood cells.

Functionally, involved in oxygen transport from the lung to the various peripheral tissues. In Psittacula krameri (Rose-ringed parakeet), this protein is Hemoglobin subunit beta (HBB).